We begin with the raw amino-acid sequence, 611 residues long: Actin-related protein 5 (611 aa).

Coiled coils occupy residues 290–329 and 355–386; these read TLTS…LDRL and SAEE…NIEV.

It belongs to the actin family. ARP5 subfamily. In terms of assembly, component of the chromatin remodeling INO80 complex.

The protein resides in the nucleus. Functionally, proposed core component of the chromatin remodeling INO80 complex which is involved in transcriptional regulation, DNA replication and probably DNA repair. This is Actin-related protein 5 (ACTR5) from Gallus gallus (Chicken).